A 361-amino-acid chain; its full sequence is Phospho-N-acetylmuramoyl-pentapeptide-transferase (361 aa).

10 helical membrane passes run 21-41, 72-92, 94-114, 135-155, 169-189, 200-220, 240-260, 263-283, 289-309, and 338-358; these read YITFRTGGAMVTALLISFVIG, TPTMGGLMILIAVIVSTLLWV, LANVYTWIVLLVTVGFGLIGF, LAWTIAIAGVAATWYIAVTPH, LLVNLGWFFIPFAILVMVGAS, GLAIVPIMIAAATFGLIAYLS, LAVFCGALVGAGLGFLWFNAP, MVFMGDTGSLSMGGALGAVSV, LVLAIVGGLFVLEAVSVMVQV, and TVVIRFWIIAAILALVGLSTL.

The protein belongs to the glycosyltransferase 4 family. MraY subfamily. The cofactor is Mg(2+).

The protein resides in the cell inner membrane. The enzyme catalyses UDP-N-acetyl-alpha-D-muramoyl-L-alanyl-gamma-D-glutamyl-meso-2,6-diaminopimeloyl-D-alanyl-D-alanine + di-trans,octa-cis-undecaprenyl phosphate = di-trans,octa-cis-undecaprenyl diphospho-N-acetyl-alpha-D-muramoyl-L-alanyl-D-glutamyl-meso-2,6-diaminopimeloyl-D-alanyl-D-alanine + UMP. Its pathway is cell wall biogenesis; peptidoglycan biosynthesis. In terms of biological role, catalyzes the initial step of the lipid cycle reactions in the biosynthesis of the cell wall peptidoglycan: transfers peptidoglycan precursor phospho-MurNAc-pentapeptide from UDP-MurNAc-pentapeptide onto the lipid carrier undecaprenyl phosphate, yielding undecaprenyl-pyrophosphoryl-MurNAc-pentapeptide, known as lipid I. The protein is Phospho-N-acetylmuramoyl-pentapeptide-transferase of Rhodospirillum centenum (strain ATCC 51521 / SW).